A 217-amino-acid polypeptide reads, in one-letter code: Imidazole glycerol phosphate synthase subunit HisH (217 aa).

In terms of domain architecture, Glutamine amidotransferase type-1 spans 1 to 212 (MLAILDYKAG…YEYCRQSRQE (212 aa)). Residue C79 is the Nucleophile of the active site. Catalysis depends on residues H187 and E189.

Heterodimer of HisH and HisF.

It is found in the cytoplasm. It carries out the reaction 5-[(5-phospho-1-deoxy-D-ribulos-1-ylimino)methylamino]-1-(5-phospho-beta-D-ribosyl)imidazole-4-carboxamide + L-glutamine = D-erythro-1-(imidazol-4-yl)glycerol 3-phosphate + 5-amino-1-(5-phospho-beta-D-ribosyl)imidazole-4-carboxamide + L-glutamate + H(+). The catalysed reaction is L-glutamine + H2O = L-glutamate + NH4(+). It functions in the pathway amino-acid biosynthesis; L-histidine biosynthesis; L-histidine from 5-phospho-alpha-D-ribose 1-diphosphate: step 5/9. Its function is as follows. IGPS catalyzes the conversion of PRFAR and glutamine to IGP, AICAR and glutamate. The HisH subunit catalyzes the hydrolysis of glutamine to glutamate and ammonia as part of the synthesis of IGP and AICAR. The resulting ammonia molecule is channeled to the active site of HisF. In Desulfovibrio desulfuricans (strain ATCC 27774 / DSM 6949 / MB), this protein is Imidazole glycerol phosphate synthase subunit HisH.